The primary structure comprises 430 residues: Alpha-1,6-mannosyl-glycoprotein 2-beta-N-acetylglucosaminyltransferase (430 aa).

Over methionine 1–aspartate 12 the chain is Cytoplasmic. Residues threonine 13 to valine 35 traverse the membrane as a helical; Signal-anchor for type II membrane protein segment. Residues proline 36 to proline 430 lie on the Lumenal side of the membrane. 2 N-linked (GlcNAc...) asparagine glycosylation sites follow: asparagine 41 and asparagine 61. Residues tyrosine 104–arginine 108 and aspartate 135 each bind substrate. Cysteine 177 and cysteine 188 are oxidised to a cystine. Position 205–209 (serine 205–histidine 209) interacts with substrate. Aspartate 237 is a Mn(2+) binding site. A disulfide bridge connects residues cysteine 259 and cysteine 262. An N-linked (GlcNAc...) asparagine glycan is attached at asparagine 295. The cysteines at positions 310 and 414 are disulfide-linked. Histidine 345 lines the Mn(2+) pocket.

It belongs to the glycosyltransferase 16 (GT16) protein family. It depends on Mn(2+) as a cofactor.

It is found in the golgi apparatus membrane. The catalysed reaction is an N(4)-{beta-D-GlcNAc-(1-&gt;2)-alpha-D-Man-(1-&gt;3)-[alpha-D-Man-(1-&gt;6)]-beta-D-Man-(1-&gt;4)-beta-D-GlcNAc-(1-&gt;4)-beta-D-GlcNAc}-L-asparaginyl-[protein] + UDP-N-acetyl-alpha-D-glucosamine = N(4)-{beta-D-GlcNAc-(1-&gt;2)-alpha-D-Man-(1-&gt;3)-[beta-D-GlcNAc-(1-&gt;2)-alpha-D-Man-(1-&gt;6)]-beta-D-Man-(1-&gt;4)-beta-D-GlcNAc-(1-&gt;4)-beta-D-GlcNAc}-L-asparaginyl-[protein] + UDP + H(+). It participates in protein modification; protein glycosylation. Functionally, catalyzes an essential step in the conversion of oligo-mannose and hybrid to complex N-glycans. This is Alpha-1,6-mannosyl-glycoprotein 2-beta-N-acetylglucosaminyltransferase from Arabidopsis thaliana (Mouse-ear cress).